A 73-amino-acid chain; its full sequence is Sec-independent protein translocase protein TatA (73 aa).

Residues Met-1–Thr-21 form a helical membrane-spanning segment.

Belongs to the TatA/E family. In terms of assembly, the Tat system comprises two distinct complexes: a TatABC complex, containing multiple copies of TatA, TatB and TatC subunits, and a separate TatA complex, containing only TatA subunits. Substrates initially bind to the TatABC complex, which probably triggers association of the separate TatA complex to form the active translocon.

Its subcellular location is the cell inner membrane. Functionally, part of the twin-arginine translocation (Tat) system that transports large folded proteins containing a characteristic twin-arginine motif in their signal peptide across membranes. TatA could form the protein-conducting channel of the Tat system. The protein is Sec-independent protein translocase protein TatA of Histophilus somni (strain 129Pt) (Haemophilus somnus).